We begin with the raw amino-acid sequence, 133 residues long: UPF0102 protein Plav_3586 (133 aa).

Belongs to the UPF0102 family.

The chain is UPF0102 protein Plav_3586 from Parvibaculum lavamentivorans (strain DS-1 / DSM 13023 / NCIMB 13966).